The sequence spans 1056 residues: Kinesin-like protein KIF11 (1056 aa).

Residues 18 to 359 (NIQVVVRCRP…LEYAHRAKNI (342 aa)) enclose the Kinesin motor domain. ATP is bound at residue 105 to 112 (GQTGTGKT). Residue lysine 146 is modified to N6-acetyllysine. Coiled coils occupy residues 364 to 480 (EVNQ…KEEY) and 736 to 763 (LEEK…DIVN). Phosphothreonine is present on threonine 458. Residue lysine 477 forms a Glycyl lysine isopeptide (Lys-Gly) (interchain with G-Cter in SUMO2) linkage. Threonine 925 carries the post-translational modification Phosphothreonine. Residue threonine 926 is modified to Phosphothreonine; by CDK1. Serine 1033 carries the post-translational modification Phosphoserine; by NEK6. Lysine 1034 is covalently cross-linked (Glycyl lysine isopeptide (Lys-Gly) (interchain with G-Cter in ubiquitin)).

It belongs to the TRAFAC class myosin-kinesin ATPase superfamily. Kinesin family. BimC subfamily. As to quaternary structure, interacts with the thyroid hormone receptor in the presence of thyroid hormone. Component of a large chromatin remodeling complex, at least composed of MYSM1, PCAF, RBM10 and KIF11/TRIP5. Interacts (via C-terminus) with the kinase NEK6 in both interphase and mitosis. Interacts with RARRES1 and AGBL2. Interacts with TPX2. Phosphorylated exclusively on serine during S phase, but on both serine and Thr-926 during mitosis, so controlling the association of KIF11 with the spindle apparatus (probably during early prophase). In terms of processing, a subset of this protein primarily localized at the spindle pole is phosphorylated by NEK6 during mitosis; phosphorylation is required for mitotic function. Post-translationally, ubiquitinated at Lys-1034 by UHRF1 via 'Lys-63'-linked ubiquitin chains, leading to interaction with spindle assembly factor TPX2, thereby ensuring accurate distribution to the spindles during metaphase.

Its subcellular location is the cytoplasm. It is found in the cytoskeleton. It localises to the spindle pole. Motor protein required for establishing a bipolar spindle and thus contributing to chromosome congression during mitosis. Required in non-mitotic cells for transport of secretory proteins from the Golgi complex to the cell surface. The polypeptide is Kinesin-like protein KIF11 (KIF11) (Homo sapiens (Human)).